The sequence spans 408 residues: Imidazolonepropionase (408 aa).

Fe(3+)-binding residues include histidine 72 and histidine 74. Positions 72 and 74 each coordinate Zn(2+). The 4-imidazolone-5-propanoate site is built by arginine 81, tyrosine 144, and histidine 177. Tyrosine 144 lines the N-formimidoyl-L-glutamate pocket. Histidine 242 serves as a coordination point for Fe(3+). Histidine 242 lines the Zn(2+) pocket. Glutamine 245 is a 4-imidazolone-5-propanoate binding site. Aspartate 317 is a Fe(3+) binding site. Aspartate 317 lines the Zn(2+) pocket. Residues asparagine 319 and glycine 321 each coordinate N-formimidoyl-L-glutamate. Threonine 322 contacts 4-imidazolone-5-propanoate.

It belongs to the metallo-dependent hydrolases superfamily. HutI family. It depends on Zn(2+) as a cofactor. Fe(3+) is required as a cofactor.

Its subcellular location is the cytoplasm. The enzyme catalyses 4-imidazolone-5-propanoate + H2O = N-formimidoyl-L-glutamate. Its pathway is amino-acid degradation; L-histidine degradation into L-glutamate; N-formimidoyl-L-glutamate from L-histidine: step 3/3. In terms of biological role, catalyzes the hydrolytic cleavage of the carbon-nitrogen bond in imidazolone-5-propanoate to yield N-formimidoyl-L-glutamate. It is the third step in the universal histidine degradation pathway. The sequence is that of Imidazolonepropionase from Aliivibrio fischeri (strain MJ11) (Vibrio fischeri).